We begin with the raw amino-acid sequence, 77 residues long: Small ribosomal subunit protein bS20 (77 aa).

Belongs to the bacterial ribosomal protein bS20 family.

In terms of biological role, binds directly to 16S ribosomal RNA. In Lactococcus lactis subsp. lactis (strain IL1403) (Streptococcus lactis), this protein is Small ribosomal subunit protein bS20.